Consider the following 291-residue polypeptide: Mitochondrial citrate transporter B (291 aa).

Solcar repeat units lie at residues 10–97, 105–193, and 201–283; these read PQKW…IKNS, LSPA…LKES, and PTLF…MTYL. A run of 6 helical transmembrane segments spans residues 16-36, 74-94, 112-132, 172-192, 203-220, and 255-276; these read LIAGGVAGGVEAASTYPFEYA, STLIIGTTAKAAVRFVSYDTI, VAGVVAGATESVLAVTPTERI, TTLKQSATSAVRMGTYNILKE, LFTTFCMGALAGVVTVYA, and FWKGSSMRLGRLLLSGGIVFSV.

The protein belongs to the mitochondrial carrier (TC 2.A.29) family.

It is found in the mitochondrion inner membrane. The enzyme catalyses citrate(in) + H(+)(in) = citrate(out) + H(+)(out). Its function is as follows. Mitochondrial transporter that mediates citrate export from mitochondria to cytoplasm. Both ctpA, ctpB, and ctpD play important roles in citric acid transport across the mitochondrial membrane and function in a redundant manner. The protein is Mitochondrial citrate transporter B of Aspergillus niger (strain ATCC 1015 / CBS 113.46 / FGSC A1144 / LSHB Ac4 / NCTC 3858a / NRRL 328 / USDA 3528.7).